The sequence spans 315 residues: Neuroguidin (315 aa).

A2 carries the post-translational modification N-acetylalanine. Positions 7-41 form a coiled coil; the sequence is LESDVSSSITLLKNLQEQVMAVTAQIQALTTKVRA. Residues 41–174 form a necessary for interaction with EIF4E region; it reads AGTYSTEKGL…KGSAKKYVPP (134 aa). S121, S142, and S143 each carry phosphoserine. The segment at 123-190 is disordered; it reads SENDPLRFKP…YDETEAEREQ (68 aa). Residues 144–155 show a composition bias toward acidic residues; sequence EDEEESEAEEGQ. Positions 180-190 are enriched in basic and acidic residues; it reads HYDETEAEREQ. A coiled-coil region spans residues 181-203; it reads YDETEAEREQKRLEKAKRRALSS. A phosphoserine mark is found at S204 and S214. 2 stretches are compositionally biased toward basic and acidic residues: residues 212–225 and 232–241; these read QYSD…DARH and SQEDQHRVNY. Disordered regions lie at residues 212 to 243 and 284 to 315; these read QYSD…NYEE and GTAH…RRRW. Positions 295 to 315 are enriched in basic residues; sequence VKKRKKLPKKGRKKKGFRRRW.

It belongs to the SAS10 family. Interacts with CPEB1 and EIF4E. In terms of tissue distribution, expressed in testis, ovary, spleen, kidney, hippocampus and cerebellum (at protein level). Expressed in testis, ovary, spleen, kidney, brain.

Its subcellular location is the nucleus. The protein localises to the nucleolus. The protein resides in the chromosome. It localises to the centromere. It is found in the cytoplasm. Its subcellular location is the cell projection. The protein localises to the axon. The protein resides in the dendrite. It localises to the filopodium. Part of the small subunit (SSU) processome, first precursor of the small eukaryotic ribosomal subunit. During the assembly of the SSU processome in the nucleolus, many ribosome biogenesis factors, an RNA chaperone and ribosomal proteins associate with the nascent pre-rRNA and work in concert to generate RNA folding, modifications, rearrangements and cleavage as well as targeted degradation of pre-ribosomal RNA by the RNA exosome. Its dissociation from the complex determines the transition from state pre-A1 to state pre-A1*. Inhibits mRNA translation in a cytoplasmic polyadenylation element (CPE)-dependent manner. In Mus musculus (Mouse), this protein is Neuroguidin (Ngdn).